Reading from the N-terminus, the 396-residue chain is DNA polymerase IV (396 aa).

The 181-residue stretch at 2–182 (ILHVDMDAFY…LPVSRLWGVG (181 aa)) folds into the UmuC domain. Residues Asp-6 and Asp-100 each contribute to the Mg(2+) site. Glu-101 is a catalytic residue.

This sequence belongs to the DNA polymerase type-Y family. In terms of assembly, monomer. Mg(2+) serves as cofactor.

It localises to the cytoplasm. The catalysed reaction is DNA(n) + a 2'-deoxyribonucleoside 5'-triphosphate = DNA(n+1) + diphosphate. In terms of biological role, poorly processive, error-prone DNA polymerase involved in untargeted mutagenesis. Copies undamaged DNA at stalled replication forks, which arise in vivo from mismatched or misaligned primer ends. These misaligned primers can be extended by PolIV. Exhibits no 3'-5' exonuclease (proofreading) activity. May be involved in translesional synthesis, in conjunction with the beta clamp from PolIII. The sequence is that of DNA polymerase IV from Rhodopirellula baltica (strain DSM 10527 / NCIMB 13988 / SH1).